Here is a 161-residue protein sequence, read N- to C-terminus: Small ribosomal subunit protein uS9 (161 aa).

2 disordered regions span residues 1–28 (MAQI…PKAP) and 142–161 (KERK…FSKR).

This sequence belongs to the universal ribosomal protein uS9 family.

The polypeptide is Small ribosomal subunit protein uS9 (Clavibacter sepedonicus (Clavibacter michiganensis subsp. sepedonicus)).